The following is a 219-amino-acid chain: Tetratricopeptide repeat protein 9A (219 aa).

Residues 1–49 (MERKGLAARSSGNPSPPALGEGPRPVPPPCVPSGGGAPERGQAGTAAEP) form a disordered region. The stretch at 56 to 89 (AHEFKSQGAQCYKDKKFREAIGKYHRALLELKGL) is one TPR 1 repeat. Residues 94 to 115 (EERDARPASSAGVPKSSRLSEE) are disordered. S102 carries the post-translational modification Phosphoserine. TPR repeat units follow at residues 125 to 160 (IDCY…EGEN) and 161 to 194 (FKAL…QPTD).

This sequence belongs to the TTC9 family.

The chain is Tetratricopeptide repeat protein 9A (Ttc9) from Mus musculus (Mouse).